The following is a 269-amino-acid chain: Shikimate dehydrogenase (NADP(+)) (269 aa).

Shikimate contacts are provided by residues 15–17 (SLS) and Thr-62. Catalysis depends on Lys-66, which acts as the Proton acceptor. The shikimate site is built by Asn-86 and Asp-99. Residues 123–127 (GAGGA), 146–151 (NRTTAK), and Leu-213 each bind NADP(+). Tyr-215 contributes to the shikimate binding site. Gly-236 lines the NADP(+) pocket.

It belongs to the shikimate dehydrogenase family. As to quaternary structure, homodimer.

It catalyses the reaction shikimate + NADP(+) = 3-dehydroshikimate + NADPH + H(+). It functions in the pathway metabolic intermediate biosynthesis; chorismate biosynthesis; chorismate from D-erythrose 4-phosphate and phosphoenolpyruvate: step 4/7. In terms of biological role, involved in the biosynthesis of the chorismate, which leads to the biosynthesis of aromatic amino acids. Catalyzes the reversible NADPH linked reduction of 3-dehydroshikimate (DHSA) to yield shikimate (SA). This Methanocella arvoryzae (strain DSM 22066 / NBRC 105507 / MRE50) protein is Shikimate dehydrogenase (NADP(+)).